The sequence spans 153 residues: MSIPFSNTHYRIPQGFGNLLEGLTREILREQPDNIPAFAAAYFENLLEKREKTNFDPAEWGAKIDDRFYNNHAFKVPSGATESKEAPPEKSEPEKETPQEVVKEQETQVSFVEEVSTDDEEAAAAAVKIQAAFRGHKARKEVKIMKESSIEEQ.

The segment at 74–117 (FKVPSGATESKEAPPEKSEPEKETPQEVVKEQETQVSFVEEVST) is disordered. Residues 82 to 106 (ESKEAPPEKSEPEKETPQEVVKEQE) are compositionally biased toward basic and acidic residues. In terms of domain architecture, IQ spans 122–151 (AAAAAVKIQAAFRGHKARKEVKIMKESSIE).

In terms of assembly, homodimer. May interact with ROPN1. In terms of tissue distribution, testis- and sperm-specific.

The protein localises to the membrane. Its function is as follows. Sperm surface zona pellucida binding protein. Helps to bind spermatozoa to the zona pellucida with high affinity. Might function in binding zona pellucida and carbohydrates. The protein is Sperm surface protein Sp17 (SPA17) of Notamacropus eugenii (Tammar wallaby).